Reading from the N-terminus, the 516-residue chain is MLMPHSAALNAARRSADLTALADGGALDVIVIGGGITGVGIALDAATRGLTVALVEKHDLAFGTSRWSSKLVHGGLRYLASGNVGIARRSAVERGILMTRNAPHLVHAMPQLVPLLPSMGHTKRALVRAGFLAGDALRVLAGTPAATLPRSRRIPASRVVEIAPTVRRDGLDGGLLAYDGQLIDDARLVMAVARTAAQHGARILTYVGASNVTGTSVELTDRRTRQSFALSARAVINAAGVWAGEIDPSLRLRPSRGTHLVFDAKSFANPTAALTIPIPGELNRFVFAMPEQLGRIYLGLTDEDAPGPIPDVPQPSSEEITFLLDTVNTALGTAVGTKDVIGAYAGLRPLIDTGGAGVQGRTADVSRDHAVFESPSGVISVVGGKLTEYRYMAEDVLNRAITLRHLRAAKCRTRNLPLIGAPANPGPAPGSGAGLPESLVARYGAEAANVAAAATCERPTEPVADGIDVTRAEFEYAVTHEGALDVDDILDRRTRIGLVPRDRERVVAVAKEFLSR.

28–56 (DVIVIGGGITGVGIALDAATRGLTVALVE) is a binding site for FAD.

It belongs to the FAD-dependent glycerol-3-phosphate dehydrogenase family. FAD is required as a cofactor.

It localises to the cytoplasm. It catalyses the reaction a quinone + sn-glycerol 3-phosphate = dihydroxyacetone phosphate + a quinol. In Mycobacterium bovis (strain ATCC BAA-935 / AF2122/97), this protein is Glycerol-3-phosphate dehydrogenase 1 (glpD1).